The sequence spans 619 residues: Sodium-dependent dopamine transporter (619 aa).

At 1 to 56 (MSKSKCSVGPMSSVVAPAKEPNAVGPREVELILVKEQNGVQLTNSTLINPPQTPVE) the chain is on the cytoplasmic side. The discontinuously helical transmembrane segment at 57–95 (VQERETWSKKIDFLLSVIGFAVDLANVWRFPYLCYKNGG) threads the bilayer. Na(+)-binding residues include Gly-75, Ala-77, Val-78, Asp-79, and Asn-82. Asp-79 provides a ligand contact to dopamine. 2 helical membrane passes run 96 to 127 (GAFL…NREG) and 128 to 171 (AAGV…FSSF). 2 residues coordinate dopamine: Ser-149 and Gly-153. The Extracellular segment spans residues 172-235 (TMDLPWIHCN…SRGIDDLGPP (64 aa)). An intrachain disulfide couples Cys-180 to Cys-189. Asn-181, Asn-188, Asn-196, and Asn-204 each carry an N-linked (GlcNAc...) asparagine glycan. Helical transmembrane passes span 236–255 (RWQL…FSLW) and 256–286 (KGVK…GVTL). The Extracellular segment spans residues 287-305 (PGAMDGIRAYLSVDFYRLC). A discontinuously helical transmembrane segment spans residues 306 to 334 (EASVWIDAATQVCFSLGVGFGVLIAFSSY). Gln-316 contributes to the chloride binding site. Phe-319 is a dopamine binding site. Residues Ser-320 and Asn-352 each coordinate Na(+). Residue Ser-320 coordinates chloride. The chain crosses the membrane as a helical span at residues 335–375 (NKFTNNCYRDAIITTSINSLTSFSSGFVVFSFLGYMAQKHN). Ser-356 contacts chloride. Over 376-399 (VPIRDVATDGPGLIFIIYPEAIAT) the chain is Extracellular. 3 helical membrane passes run 400 to 441 (LPLS…QLLH), 442 to 465 (RHRE…CVTN), and 466 to 498 (GGIY…AWFY). The Na(+) site is built by Leu-417, Asp-420, and Ser-421. Residues Ser-421 and Ala-422 each coordinate dopamine. Over 499 to 515 (GVQQFSDDIKQMTGQRP) the chain is Cytoplasmic. Residues 516 to 541 (NLYWRLCWKLVSPCFLLYVVVVSIVT) traverse the membrane as a helical segment. Residues 542–552 (FRPPHYGAYIF) lie on the Extracellular side of the membrane. A helical transmembrane segment spans residues 553-582 (PDWANALGWIIATSSMAMVPIYATYKFCSL). Residues 560 to 589 (GWIIATSSMAMVPIYATYKFCSLPGSFREK) are interaction with TGFB1I1. Topologically, residues 583–619 (PGSFREKLAYAITPEKDRQLVDRGEVRQFTLRHWLLV) are cytoplasmic.

It belongs to the sodium:neurotransmitter symporter (SNF) (TC 2.A.22) family. SLC6A3 subfamily. Monomer. Homooligomer; disulfide-linked. Interacts with PRKCABP and TGFB1I1. Interacts (via N-terminus) with SYNGR3 (via N-terminus). Interacts with SLC18A2. Interacts with TOR1A (ATP-bound); TOR1A regulates SLC6A3 subcellular location. Interacts with alpha-synuclein/SNCA. Interacts with SEPTIN4. As to expression, found in the substantia nigra and ventral tegmental dopamine neurons, in fibers of the medial forebrain bundle ascending into the striatum, and within dense fiber networks and varicosities in the dorsal and ventral striatum (at protein level). Lower expression in the cortex (at protein level). Absent from the corpus callosum. Expressed throughout the retina at postnatal day 8.

The protein resides in the cell membrane. The protein localises to the cell projection. It localises to the neuron projection. It is found in the axon. The enzyme catalyses dopamine(out) + chloride(out) + Na(+)(out) = dopamine(in) + chloride(in) + Na(+)(in). The catalysed reaction is (R)-noradrenaline(out) + chloride(out) + Na(+)(out) = (R)-noradrenaline(in) + chloride(in) + Na(+)(in). It catalyses the reaction dopamine(out) + chloride(out) + 2 Na(+)(out) = dopamine(in) + chloride(in) + 2 Na(+)(in). With respect to regulation, inhibited by amphetamine, bupropion, cocaine and ritalin. Inhibited by zinc ions. Mediates sodium- and chloride-dependent transport of dopamine. Also mediates sodium- and chloride-dependent transport of norepinephrine (also known as noradrenaline). Regulator of light-dependent retinal hyaloid vessel regression, downstream of OPN5 signaling. This is Sodium-dependent dopamine transporter (Slc6a3) from Mus musculus (Mouse).